Here is a 200-residue protein sequence, read N- to C-terminus: dITP/XTP pyrophosphatase (200 aa).

8-13 (SQNSSK) is a binding site for substrate. Mg(2+) is bound by residues Glu40 and Asp69. Catalysis depends on Asp69, which acts as the Proton acceptor. Residues Ser70, 154–157 (FGYD), Lys177, and 182–183 (HR) each bind substrate.

The protein belongs to the HAM1 NTPase family. Homodimer. It depends on Mg(2+) as a cofactor.

The enzyme catalyses XTP + H2O = XMP + diphosphate + H(+). It carries out the reaction dITP + H2O = dIMP + diphosphate + H(+). It catalyses the reaction ITP + H2O = IMP + diphosphate + H(+). Functionally, pyrophosphatase that catalyzes the hydrolysis of nucleoside triphosphates to their monophosphate derivatives, with a high preference for the non-canonical purine nucleotides XTP (xanthosine triphosphate), dITP (deoxyinosine triphosphate) and ITP. Seems to function as a house-cleaning enzyme that removes non-canonical purine nucleotides from the nucleotide pool, thus preventing their incorporation into DNA/RNA and avoiding chromosomal lesions. The polypeptide is dITP/XTP pyrophosphatase (Coxiella burnetii (strain RSA 493 / Nine Mile phase I)).